The primary structure comprises 496 residues: MSGSNVVLCILDGWGNGSGGRYDAIHAAYTPFWDTAVSCCPMSSLSASGTDVGLPSGQVGNSEVGHISIGCGRIVLQDLLRINLEINEVHKNPKLLDFVRDIQAKGGVCHMIGLLSDGGVHSLQAHMETIIEVITGFGIKVFIHVILDGRDVPPRSAEKYIGMLNAKIEHLNAEIATVAGRYYAMDRDNRLDRTCKAYDAIAYATGPRSGSAMEALEKSYNSGVTDEFMVPTVIGDYDGMGAEDGVLFTNFRNDRVLQLLGMLLHRFPEVSNVLGMRQYSEKMRIASLFPPREIHRSLGEVISERGLKQLRIAETEKFAHVTFFFNGGREEPFTGEDRIIIPSPDVSTYDLKPEMSAVEITDSLVERINSQQYALTVVNYANADMVGHTGNMEAAKKAVTTVDSCLQRVFYAAVNAGAVMLITADHGNAEKMFDVQNDSPFTAHTSSMVPFVVCNADGDISLSDGRLCDVAPTVLDLMNIPQPSDMTGCSLITRNS.

Mn(2+) is bound by residues D12 and S62. S62 acts as the Phosphoserine intermediate in catalysis. Substrate is bound by residues H121, 150 to 151 (RD), R181, R187, 252 to 255 (RNDR), and K317. Positions 384, 388, 425, 426, and 444 each coordinate Mn(2+).

The protein belongs to the BPG-independent phosphoglycerate mutase family. In terms of assembly, monomer. Mn(2+) serves as cofactor.

It carries out the reaction (2R)-2-phosphoglycerate = (2R)-3-phosphoglycerate. It functions in the pathway carbohydrate degradation; glycolysis; pyruvate from D-glyceraldehyde 3-phosphate: step 3/5. Its function is as follows. Catalyzes the interconversion of 2-phosphoglycerate and 3-phosphoglycerate. This Anaplasma phagocytophilum (strain HZ) protein is 2,3-bisphosphoglycerate-independent phosphoglycerate mutase.